The chain runs to 107 residues: MTAYTLADLAALVASRAGTDPATSYTAKLLSEGPAKAAKKLGEEAVEAAIAAVQGDKTGLRNEAADVLYHLVVLLWAGGVELDAVMAELERRTAQSGIAEKAARRPA.

It belongs to the PRA-PH family.

It is found in the cytoplasm. It catalyses the reaction 1-(5-phospho-beta-D-ribosyl)-ATP + H2O = 1-(5-phospho-beta-D-ribosyl)-5'-AMP + diphosphate + H(+). Its pathway is amino-acid biosynthesis; L-histidine biosynthesis; L-histidine from 5-phospho-alpha-D-ribose 1-diphosphate: step 2/9. In Methylobacterium radiotolerans (strain ATCC 27329 / DSM 1819 / JCM 2831 / NBRC 15690 / NCIMB 10815 / 0-1), this protein is Phosphoribosyl-ATP pyrophosphatase.